The chain runs to 665 residues: Fermitin family homolog 3 (665 aa).

Phosphotyrosine is present on tyrosine 11. In terms of domain architecture, FERM spans 229-556 (WLDSSRCLMQ…SLPDFGISYV (328 aa)). The PH domain occupies 354–453 (DHLRIFRPRK…WMAGCRLASK (100 aa)). Residue tyrosine 502 is modified to Phosphotyrosine. At threonine 589 the chain carries Phosphothreonine.

Belongs to the kindlin family. In terms of assembly, interacts with ITGB1, ITGB2 and ITGB3 (via cytoplasmic tails).

Its subcellular location is the cell projection. The protein resides in the podosome. Functionally, plays a central role in cell adhesion in hematopoietic cells. Acts by activating the integrin beta-1-3 (ITGB1, ITGB2 and ITGB3). Required for integrin-mediated platelet adhesion and leukocyte adhesion to endothelial cells. Required for activation of integrin beta-2 (ITGB2) in polymorphonuclear granulocytes (PMNs). The protein is Fermitin family homolog 3 (FERMT3) of Bos taurus (Bovine).